A 404-amino-acid chain; its full sequence is Trigger factor (404 aa).

Residues 160 to 225 (KDHLFVRTEE…VLEVKTLKLP (66 aa)) form the PPIase FKBP-type domain.

The protein belongs to the FKBP-type PPIase family. Tig subfamily.

The protein resides in the cytoplasm. It catalyses the reaction [protein]-peptidylproline (omega=180) = [protein]-peptidylproline (omega=0). Functionally, involved in protein export. Acts as a chaperone by maintaining the newly synthesized protein in an open conformation. Functions as a peptidyl-prolyl cis-trans isomerase. The protein is Trigger factor of Thermus thermophilus (strain ATCC BAA-163 / DSM 7039 / HB27).